Reading from the N-terminus, the 338-residue chain is Ketol-acid reductoisomerase (NADP(+)) (338 aa).

Positions 1–181 (MQVYYDKDCD…GGGRTGIIET (181 aa)) constitute a KARI N-terminal Rossmann domain. Residues 24-27 (YGSQ), R47, S50, S52, and 82-85 (DEFQ) each bind NADP(+). The active site involves H107. G133 lines the NADP(+) pocket. In terms of domain architecture, KARI C-terminal knotted spans 182 to 327 (TFKDETETDL…EKLRSMMPWI (146 aa)). The Mg(2+) site is built by D190, E194, E226, and E230. Residue S251 participates in substrate binding.

This sequence belongs to the ketol-acid reductoisomerase family. It depends on Mg(2+) as a cofactor.

It catalyses the reaction (2R)-2,3-dihydroxy-3-methylbutanoate + NADP(+) = (2S)-2-acetolactate + NADPH + H(+). It carries out the reaction (2R,3R)-2,3-dihydroxy-3-methylpentanoate + NADP(+) = (S)-2-ethyl-2-hydroxy-3-oxobutanoate + NADPH + H(+). It functions in the pathway amino-acid biosynthesis; L-isoleucine biosynthesis; L-isoleucine from 2-oxobutanoate: step 2/4. The protein operates within amino-acid biosynthesis; L-valine biosynthesis; L-valine from pyruvate: step 2/4. Involved in the biosynthesis of branched-chain amino acids (BCAA). Catalyzes an alkyl-migration followed by a ketol-acid reduction of (S)-2-acetolactate (S2AL) to yield (R)-2,3-dihydroxy-isovalerate. In the isomerase reaction, S2AL is rearranged via a Mg-dependent methyl migration to produce 3-hydroxy-3-methyl-2-ketobutyrate (HMKB). In the reductase reaction, this 2-ketoacid undergoes a metal-dependent reduction by NADPH to yield (R)-2,3-dihydroxy-isovalerate. In Hahella chejuensis (strain KCTC 2396), this protein is Ketol-acid reductoisomerase (NADP(+)).